We begin with the raw amino-acid sequence, 249 residues long: tRNA (guanine-N(1)-)-methyltransferase (249 aa).

Residues Gly113 and 133-138 (IGDFVL) contribute to the S-adenosyl-L-methionine site.

This sequence belongs to the RNA methyltransferase TrmD family. Homodimer.

The protein resides in the cytoplasm. It catalyses the reaction guanosine(37) in tRNA + S-adenosyl-L-methionine = N(1)-methylguanosine(37) in tRNA + S-adenosyl-L-homocysteine + H(+). Specifically methylates guanosine-37 in various tRNAs. The sequence is that of tRNA (guanine-N(1)-)-methyltransferase from Photobacterium profundum (strain SS9).